The chain runs to 613 residues: Dihydroxy-acid dehydratase (613 aa).

Aspartate 81 contacts Mg(2+). Cysteine 122 provides a ligand contact to [2Fe-2S] cluster. Mg(2+)-binding residues include aspartate 123 and lysine 124. Lysine 124 is modified (N6-carboxylysine). Cysteine 195 contacts [2Fe-2S] cluster. Glutamate 491 lines the Mg(2+) pocket. The active-site Proton acceptor is the serine 517.

It belongs to the IlvD/Edd family. Homodimer. Requires [2Fe-2S] cluster as cofactor. It depends on Mg(2+) as a cofactor.

The catalysed reaction is (2R)-2,3-dihydroxy-3-methylbutanoate = 3-methyl-2-oxobutanoate + H2O. It catalyses the reaction (2R,3R)-2,3-dihydroxy-3-methylpentanoate = (S)-3-methyl-2-oxopentanoate + H2O. Its pathway is amino-acid biosynthesis; L-isoleucine biosynthesis; L-isoleucine from 2-oxobutanoate: step 3/4. The protein operates within amino-acid biosynthesis; L-valine biosynthesis; L-valine from pyruvate: step 3/4. In terms of biological role, functions in the biosynthesis of branched-chain amino acids. Catalyzes the dehydration of (2R,3R)-2,3-dihydroxy-3-methylpentanoate (2,3-dihydroxy-3-methylvalerate) into 2-oxo-3-methylpentanoate (2-oxo-3-methylvalerate) and of (2R)-2,3-dihydroxy-3-methylbutanoate (2,3-dihydroxyisovalerate) into 2-oxo-3-methylbutanoate (2-oxoisovalerate), the penultimate precursor to L-isoleucine and L-valine, respectively. In Hyphomonas neptunium (strain ATCC 15444), this protein is Dihydroxy-acid dehydratase.